We begin with the raw amino-acid sequence, 96 residues long: Ribonuclease P protein component 1 (96 aa).

It belongs to the eukaryotic/archaeal RNase P protein component 1 family. As to quaternary structure, consists of a catalytic RNA component and at least 4-5 protein subunits.

The protein resides in the cytoplasm. It carries out the reaction Endonucleolytic cleavage of RNA, removing 5'-extranucleotides from tRNA precursor.. Part of ribonuclease P, a protein complex that generates mature tRNA molecules by cleaving their 5'-ends. In Methanococcus aeolicus (strain ATCC BAA-1280 / DSM 17508 / OCM 812 / Nankai-3), this protein is Ribonuclease P protein component 1.